A 330-amino-acid chain; its full sequence is Intraflagellar transport protein 46 homolog (330 aa).

2 disordered regions span residues 1–21 (MDRP…ATPR) and 55–112 (SIKT…EGVY). The segment covering 7 to 16 (ETVDIPDSED) has biased composition (acidic residues). Basic and acidic residues predominate over residues 68–79 (SSSEKLCDRGSS). Residues 80–101 (DDDDDDDNDDDEDEDDDDDDEN) are compositionally biased toward acidic residues.

Belongs to the IFT46 family.

It localises to the cytoplasm. The protein localises to the cytoskeleton. Its subcellular location is the cilium basal body. It is found in the cell projection. The protein resides in the cilium. Its function is as follows. Forms part of a complex involved in intraflagellar transport (IFT), the bi-directional movement of particles required for the assembly, maintenance and functioning of primary cilia. The chain is Intraflagellar transport protein 46 homolog from Schistosoma japonicum (Blood fluke).